A 186-amino-acid chain; its full sequence is MSKTDWNASGLSRPSPSAHWPSRKPWQHGQKYQTTQDRTEPPARKRRQAVRVSANHASQQLDQLKAVHLASAVRDLEKAMTTLKLWESPQEISRHQALGYSVIMFMITAVKRLRESKMLTLSWFNQALMVIAPSQEETMNLKTAMWILANLIPRDMLSLTGDLLPSLWGSGLLMLKLQKEGRSTSS.

Polar residues predominate over residues 1 to 15; sequence MSKTDWNASGLSRPS. Residues 1-45 are disordered; sequence MSKTDWNASGLSRPSPSAHWPSRKPWQHGQKYQTTQDRTEPPARK.

The protein belongs to the morbillivirus protein C family. In terms of assembly, interacts with the phosphoprotein (via C-terminus); this interaction allows C to associate with the ribonucleocapsid.

The protein localises to the host nucleus. It localises to the host cytoplasmic vesicle. In terms of biological role, ribonucleocapsid-associated protein that interacts with the phosphoprotein (P), thereby increasing replication accuracy and processivity of the polymerase complex. The chain is Protein C (P/V/C) from Homo sapiens (Human).